A 314-amino-acid chain; its full sequence is 1D-myo-inositol 2-acetamido-2-deoxy-alpha-D-glucopyranoside deacetylase 2 (314 aa).

Zn(2+) contacts are provided by His25, Asp28, and His161.

Belongs to the MshB deacetylase family. The cofactor is Zn(2+).

The enzyme catalyses 1D-myo-inositol 2-acetamido-2-deoxy-alpha-D-glucopyranoside + H2O = 1D-myo-inositol 2-amino-2-deoxy-alpha-D-glucopyranoside + acetate. Catalyzes the deacetylation of 1D-myo-inositol 2-acetamido-2-deoxy-alpha-D-glucopyranoside (GlcNAc-Ins) in the mycothiol biosynthesis pathway. This Frankia casuarinae (strain DSM 45818 / CECT 9043 / HFP020203 / CcI3) protein is 1D-myo-inositol 2-acetamido-2-deoxy-alpha-D-glucopyranoside deacetylase 2.